The sequence spans 1640 residues: MAIDVDRTLAVLRRKLEALGYSDPLEPASLQLVQKLVEDLVHTTDSYTAVKQQCAKQAQEIAAFDTRLESVRQDSVRLQSENSQLHVLVMQHAERHEREAREHYTAVKRLEDTIAELSYWKHAAAEKLASADKENAGLRKRCEELAKLTDRLASGAATPQSVAPKISSRSPIRVAPPPSPPRPRQATVDVLQAANGRILSLQRQLADATAELQELRQRVAEDEDQIRRRDVEIDRLGTRAGTDTNVLALRARNEANESMILQLNGTVESLAARVRELEAVEVRCEELQGALRRAEMDRDQAEERYSRSARDHDALSREVLGLRRDLAALQDTNNRAAGLLAADAAGASTPDTTAGAPALRQRLADSRADVERLSGQLAAADMERRNLAQQLSALRSELDDTQFLLAEAQSRAAGLAAAQAVAESEARRLAGEAAAREGRLRELDSQLAVVLSDLEARQAGFAALEKDRAEANARAEELARRLDEVERSAASERAAAAAAQQSVSRLDSELRVVRGSAAALEAEAAALRQELQDVSVGKVRATSALSSTEDEAVRARQQAEALRMQLTAERRAAEELRAGHDTLQLEVDRLGGQLALQQQEAELLRQQLAAARGELAASEAAASGAEQKLSGLGALSQRLEEMGEQARRAQAATAEAEAEAVRLRAAVSEAKEGQARAERGLREARREVEGAREAEALVRAQLREVEAQAEGTSKALKAAEADRDRALMDARLAAGDLASLRDQLAAETSSAADAGSTARQMAARLSAAERAAAAAQEERERAAVAAEEAEAAAAAARGREEEARAQGREWAERARRAEALVAEYEADVAQLRAARDSDAAALRSLEDTVAAARRDLDARRSEVEQLTTLSLRGDATVQEYMANLKAMSTDLRAAEMRAADLAGEAAAAQDAAASWRSEAEQLRGLLRQMDADRDNLQHELDAKAERLVAQEQQLAGAQAAEQEAARLLALAEGRLALTDNRAREGEAEAAAVRAQLAAALDSVRALSGEGEALREELRAVSEDLEALVRENQVVGGELAAVAAQRDSAAEEARRLGGRRASAEQLLRAKEAEAEDLRRVYEALAAEHRRLQGGVGALEREGAMREAALQAKAAEVSSLAESQRAAQATINQYVMDLQAFERQVDSLSRQLSQAEADGEELVRQREALLEEIRAAQQVRLGLERHREELQRQVASLDSQVAIGRARLEDSNSEAASLNQRLAMERSRVAELEGLLAGMRAREFRSDFASDRAGGQLAVMVDRNRALEEQVASLQHQVGALQASREAQDRELSRLRGEALALAASTAASLEGRTAAAGGAAAGAAKDQAAALDRLTSERDAAQDEAARLRGALAAAEAAAASASTAAAVSIPAAGSGSEAAAVLRVRCSELERRNTELMQELRTLQDTCRQQESLLSAAQNELSALQAEHRRLVELVARLDQDKAAAAAEAAAARQQVATATRRVATAEQEAAAGAARLQSQLRDEQGRRRQAERDFLELLSSIEGAGGEAAAAAVAAAHGEGAAELASRRLRELQTQVDALEAEKAGLEEATQRTRATLGAMSGQMAAIQAEYDATNTALAGLAGAMAAGAQGQGQVQGPAGTAPAAAAGAPGPQPGQAQAGGFGGAHGGGSISLSGGPRR.

Residues 11-64 form a homodimerization region; that stretch reads VLRRKLEALGYSDPLEPASLQLVQKLVEDLVHTTDSYTAVKQQCAKQAQEIAAF. Residues 93–148 adopt a coiled-coil conformation; that stretch reads AERHEREAREHYTAVKRLEDTIAELSYWKHAAAEKLASADKENAGLRKRCEELAKL. Residues 154-185 are disordered; sequence SGAATPQSVAPKISSRSPIRVAPPPSPPRPRQ. The segment covering 174 to 183 has biased composition (pro residues); it reads VAPPPSPPRP. 10 coiled-coil regions span residues 191–232, 260–332, 370–411, 461–722, 758–960, 1010–1030, 1059–1086, 1129–1282, 1323–1494, and 1523–1557; these read LQAA…RDVE, ILQL…LQDT, VERL…AQSR, FAAL…AEAD, ARQM…AQAA, GEAL…LVRE, RASA…LAAE, INQY…LQAS, AKDQ…AERD, and AELA…TRAT. Residues 1592–1618 show a composition bias toward low complexity; sequence GQGQVQGPAGTAPAAAAGAPGPQPGQA. Positions 1592–1640 are disordered; it reads GQGQVQGPAGTAPAAAAGAPGPQPGQAQAGGFGGAHGGGSISLSGGPRR. The span at 1619-1631 shows a compositional bias: gly residues; the sequence is QAGGFGGAHGGGS.

The protein belongs to the CEP135/TSGA10 family. In terms of assembly, homodimer.

The protein resides in the cytoplasm. It localises to the cytoskeleton. The protein localises to the microtubule organizing center. It is found in the centrosome. Its subcellular location is the centriole. Its function is as follows. Microtubule-binding protein essential for cytoskeletal organization (e.g. rootlet microtubule bundles) and flagellar basal body/centriole assembly. This is Basal body protein 10 from Chlamydomonas reinhardtii (Chlamydomonas smithii).